The sequence spans 256 residues: Endonuclease NucS (256 aa).

The tract at residues 62–97 (AAKSAQHSRESVAGGAVDGDSATHSPESVAAGEPEK) is disordered.

It belongs to the NucS endonuclease family.

The protein localises to the cytoplasm. In terms of biological role, cleaves both 3' and 5' ssDNA extremities of branched DNA structures. The polypeptide is Endonuclease NucS (Bifidobacterium longum (strain NCC 2705)).